The primary structure comprises 322 residues: Aspartate carbamoyltransferase catalytic subunit (322 aa).

The carbamoyl phosphate site is built by R65 and T66. K93 contributes to the L-aspartate binding site. 3 residues coordinate carbamoyl phosphate: R115, H143, and Q146. Residues R176 and R230 each contribute to the L-aspartate site. Residues G271 and P272 each coordinate carbamoyl phosphate.

This sequence belongs to the aspartate/ornithine carbamoyltransferase superfamily. ATCase family. Heterododecamer (2C3:3R2) of six catalytic PyrB chains organized as two trimers (C3), and six regulatory PyrI chains organized as three dimers (R2).

It catalyses the reaction carbamoyl phosphate + L-aspartate = N-carbamoyl-L-aspartate + phosphate + H(+). Its pathway is pyrimidine metabolism; UMP biosynthesis via de novo pathway; (S)-dihydroorotate from bicarbonate: step 2/3. Catalyzes the condensation of carbamoyl phosphate and aspartate to form carbamoyl aspartate and inorganic phosphate, the committed step in the de novo pyrimidine nucleotide biosynthesis pathway. This Brucella canis (strain ATCC 23365 / NCTC 10854 / RM-666) protein is Aspartate carbamoyltransferase catalytic subunit.